The following is a 623-amino-acid chain: UvrABC system protein C (623 aa).

The region spanning 12–91 (FSPGVYLYKD…IKQYKPRFNI (80 aa)) is the GIY-YIG domain. In terms of domain architecture, UVR spans 201 to 236 (SDLARGLRARMEAASLEMRFEEAAGLRDLITTVEEI). The interval 604–623 (PVASVAQSEDAAPDVPDPQA) is disordered.

This sequence belongs to the UvrC family. As to quaternary structure, interacts with UvrB in an incision complex.

It localises to the cytoplasm. Functionally, the UvrABC repair system catalyzes the recognition and processing of DNA lesions. UvrC both incises the 5' and 3' sides of the lesion. The N-terminal half is responsible for the 3' incision and the C-terminal half is responsible for the 5' incision. This is UvrABC system protein C from Solibacter usitatus (strain Ellin6076).